Here is a 350-residue protein sequence, read N- to C-terminus: Small-conductance mechanosensitive channel MscMJ (350 aa).

A run of 5 helical transmembrane segments spans residues 10–30 (ISNI…GKIV), 59–79 (LPII…FLIL), 91–111 (VKVV…DGIF), 130–150 (IIKP…ILTA), and 154–174 (VGYD…ALAL).

The protein belongs to the MscS (TC 1.A.23) family.

Its subcellular location is the cell membrane. Functionally, small-conductance mechanosensitive channel that opens in response to stretch forces in the membrane lipid bilayer. Exhibits a sixfold preference for cations over anions. Non-rectifying. This Methanocaldococcus jannaschii (strain ATCC 43067 / DSM 2661 / JAL-1 / JCM 10045 / NBRC 100440) (Methanococcus jannaschii) protein is Small-conductance mechanosensitive channel MscMJ.